The primary structure comprises 334 residues: Ribosomal RNA large subunit methyltransferase F (334 aa).

The disordered stretch occupies residues 1–25 (MPRPSSPRPDAERKSASPLHPRNRH).

This sequence belongs to the methyltransferase superfamily. METTL16/RlmF family.

The protein localises to the cytoplasm. The catalysed reaction is adenosine(1618) in 23S rRNA + S-adenosyl-L-methionine = N(6)-methyladenosine(1618) in 23S rRNA + S-adenosyl-L-homocysteine + H(+). Its function is as follows. Specifically methylates the adenine in position 1618 of 23S rRNA. This Pseudomonas paraeruginosa (strain DSM 24068 / PA7) (Pseudomonas aeruginosa (strain PA7)) protein is Ribosomal RNA large subunit methyltransferase F.